The chain runs to 261 residues: Hemin import ATP-binding protein HmuV (261 aa).

The ABC transporter domain maps to 7-243 (LRGQNLSLQF…EIIDAVYGYK (237 aa)). ATP is bound at residue 39–46 (GPNGAGKS).

It belongs to the ABC transporter superfamily. Heme (hemin) importer (TC 3.A.1.14.5) family. In terms of assembly, the complex is composed of two ATP-binding proteins (HmuV), two transmembrane proteins (HmuU) and a solute-binding protein (HmuT).

It is found in the cell inner membrane. Functionally, part of the ABC transporter complex HmuTUV involved in hemin import. Responsible for energy coupling to the transport system. The polypeptide is Hemin import ATP-binding protein HmuV (Vibrio vulnificus (strain CMCP6)).